Here is a 75-residue protein sequence, read N- to C-terminus: UPF0352 protein YejL (75 aa).

The protein belongs to the UPF0352 family.

The protein is UPF0352 protein YejL of Escherichia coli O139:H28 (strain E24377A / ETEC).